The primary structure comprises 417 residues: Serine hydroxymethyltransferase (417 aa).

An N6-acetyllysine modification is found at Lys54. (6S)-5,6,7,8-tetrahydrofolate is bound by residues Leu121 and 125–127 (GHL). The residue at position 229 (Lys229) is an N6-(pyridoxal phosphate)lysine. N6-acetyllysine occurs at positions 250, 285, and 354. Position 355 to 357 (355 to 357 (SPF)) interacts with (6S)-5,6,7,8-tetrahydrofolate. Lys375 is subject to N6-acetyllysine.

The protein belongs to the SHMT family. As to quaternary structure, homodimer. Pyridoxal 5'-phosphate is required as a cofactor.

The protein resides in the cytoplasm. The enzyme catalyses (6R)-5,10-methylene-5,6,7,8-tetrahydrofolate + glycine + H2O = (6S)-5,6,7,8-tetrahydrofolate + L-serine. The protein operates within one-carbon metabolism; tetrahydrofolate interconversion. It functions in the pathway amino-acid biosynthesis; glycine biosynthesis; glycine from L-serine: step 1/1. Its function is as follows. Catalyzes the reversible interconversion of serine and glycine with tetrahydrofolate (THF) serving as the one-carbon carrier. This reaction serves as the major source of one-carbon groups required for the biosynthesis of purines, thymidylate, methionine, and other important biomolecules. Also exhibits THF-independent aldolase activity toward beta-hydroxyamino acids, producing glycine and aldehydes, via a retro-aldol mechanism. This Shigella dysenteriae serotype 1 (strain Sd197) protein is Serine hydroxymethyltransferase.